A 365-amino-acid chain; its full sequence is GTPase Obg (365 aa).

The Obg domain maps to 1–159 (MKFIDEARIE…RMLKLELKVL (159 aa)). Residues 160–334 (ADVGLLGMPN…LIYAIKDHLQ (175 aa)) form the OBG-type G domain. GTP-binding positions include 166 to 173 (GMPNAGKS), 191 to 195 (FTTLH), 213 to 216 (DIPG), 284 to 287 (NKLD), and 315 to 317 (SAL). Residues serine 173 and threonine 193 each contribute to the Mg(2+) site.

It belongs to the TRAFAC class OBG-HflX-like GTPase superfamily. OBG GTPase family. As to quaternary structure, monomer. It depends on Mg(2+) as a cofactor.

The protein resides in the cytoplasm. Functionally, an essential GTPase which binds GTP, GDP and possibly (p)ppGpp with moderate affinity, with high nucleotide exchange rates and a fairly low GTP hydrolysis rate. Plays a role in control of the cell cycle, stress response, ribosome biogenesis and in those bacteria that undergo differentiation, in morphogenesis control. This Cupriavidus taiwanensis (strain DSM 17343 / BCRC 17206 / CCUG 44338 / CIP 107171 / LMG 19424 / R1) (Ralstonia taiwanensis (strain LMG 19424)) protein is GTPase Obg.